We begin with the raw amino-acid sequence, 140 residues long: 3-hydroxyacyl-[acyl-carrier-protein] dehydratase FabZ (140 aa).

H47 is a catalytic residue.

Belongs to the thioester dehydratase family. FabZ subfamily.

The protein resides in the cytoplasm. The catalysed reaction is a (3R)-hydroxyacyl-[ACP] = a (2E)-enoyl-[ACP] + H2O. Its function is as follows. Involved in unsaturated fatty acids biosynthesis. Catalyzes the dehydration of short chain beta-hydroxyacyl-ACPs and long chain saturated and unsaturated beta-hydroxyacyl-ACPs. This is 3-hydroxyacyl-[acyl-carrier-protein] dehydratase FabZ from Streptococcus mutans serotype c (strain ATCC 700610 / UA159).